Reading from the N-terminus, the 855-residue chain is Leucine--tRNA ligase (855 aa).

A 'HIGH' region motif is present at residues Pro-42 to His-52. Residues Ser-292–Lys-311 are disordered. Over residues Glu-293–Lys-303 the composition is skewed to basic and acidic residues. The short motif at Lys-614–Ser-618 is the 'KMSKS' region element. Lys-617 contacts ATP.

It belongs to the class-I aminoacyl-tRNA synthetase family.

Its subcellular location is the cytoplasm. The enzyme catalyses tRNA(Leu) + L-leucine + ATP = L-leucyl-tRNA(Leu) + AMP + diphosphate. The protein is Leucine--tRNA ligase of Acaryochloris marina (strain MBIC 11017).